A 66-amino-acid chain; its full sequence is Large ribosomal subunit protein uL29 (66 aa).

It belongs to the universal ribosomal protein uL29 family.

The polypeptide is Large ribosomal subunit protein uL29 (Rhizobium etli (strain ATCC 51251 / DSM 11541 / JCM 21823 / NBRC 15573 / CFN 42)).